We begin with the raw amino-acid sequence, 201 residues long: Recombination protein RecR (201 aa).

The C4-type zinc finger occupies 60 to 75; that stretch reads CETCGNIDTRSPCTIC. A Toprim domain is found at 83–178; sequence SIIVVVADVA…KVTRLAHGVP (96 aa).

This sequence belongs to the RecR family.

In terms of biological role, may play a role in DNA repair. It seems to be involved in an RecBC-independent recombinational process of DNA repair. It may act with RecF and RecO. The protein is Recombination protein RecR of Nitrobacter winogradskyi (strain ATCC 25391 / DSM 10237 / CIP 104748 / NCIMB 11846 / Nb-255).